We begin with the raw amino-acid sequence, 428 residues long: Enolase (428 aa).

(2R)-2-phosphoglycerate is bound at residue Gln163. Glu205 (proton donor) is an active-site residue. 3 residues coordinate Mg(2+): Asp242, Glu285, and Asp312. The (2R)-2-phosphoglycerate site is built by Lys337, Arg366, Ser367, and Lys388. Lys337 serves as the catalytic Proton acceptor.

This sequence belongs to the enolase family. The cofactor is Mg(2+).

The protein localises to the cytoplasm. The protein resides in the secreted. It localises to the cell surface. The enzyme catalyses (2R)-2-phosphoglycerate = phosphoenolpyruvate + H2O. The protein operates within carbohydrate degradation; glycolysis; pyruvate from D-glyceraldehyde 3-phosphate: step 4/5. Functionally, catalyzes the reversible conversion of 2-phosphoglycerate (2-PG) into phosphoenolpyruvate (PEP). It is essential for the degradation of carbohydrates via glycolysis. This Neisseria meningitidis serogroup A / serotype 4A (strain DSM 15465 / Z2491) protein is Enolase.